A 432-amino-acid polypeptide reads, in one-letter code: Adenylosuccinate synthetase (432 aa).

GTP-binding positions include 13–19 (GDEGKGK) and 41–43 (GHT). D14 (proton acceptor) is an active-site residue. The Mg(2+) site is built by D14 and G41. Residues 14 to 17 (DEGK), 39 to 42 (NAGH), T130, R144, Q225, T240, and R304 contribute to the IMP site. H42 serves as the catalytic Proton donor. 300 to 306 (ATTGRRR) provides a ligand contact to substrate. Residues R306, 332 to 334 (KLD), and 415 to 417 (STG) contribute to the GTP site.

The protein belongs to the adenylosuccinate synthetase family. Homodimer. The cofactor is Mg(2+).

The protein resides in the cytoplasm. It carries out the reaction IMP + L-aspartate + GTP = N(6)-(1,2-dicarboxyethyl)-AMP + GDP + phosphate + 2 H(+). The protein operates within purine metabolism; AMP biosynthesis via de novo pathway; AMP from IMP: step 1/2. Functionally, plays an important role in the de novo pathway of purine nucleotide biosynthesis. Catalyzes the first committed step in the biosynthesis of AMP from IMP. The polypeptide is Adenylosuccinate synthetase (Klebsiella pneumoniae (strain 342)).